The sequence spans 485 residues: Rhamnulokinase (485 aa).

Residue 8–12 coordinates ATP; sequence ASSGR. Substrate contacts are provided by residues Gly-78 and 231–233; that span reads HDT. Catalysis depends on Asp-232, which acts as the Proton acceptor. Thr-254 is a binding site for ATP. Position 291 (Asn-291) interacts with substrate. Gln-299 provides a ligand contact to ATP. Cys-348 and Cys-365 are joined by a disulfide. Position 397 (Gly-397) interacts with ATP. Cys-408 and Cys-412 form a disulfide bridge.

The protein belongs to the rhamnulokinase family. Mg(2+) serves as cofactor.

It carries out the reaction L-rhamnulose + ATP = L-rhamnulose 1-phosphate + ADP + H(+). It participates in carbohydrate degradation; L-rhamnose degradation; glycerone phosphate from L-rhamnose: step 2/3. Its function is as follows. Involved in the catabolism of L-rhamnose (6-deoxy-L-mannose). Catalyzes the transfer of the gamma-phosphate group from ATP to the 1-hydroxyl group of L-rhamnulose to yield L-rhamnulose 1-phosphate. The polypeptide is Rhamnulokinase (Yersinia pestis bv. Antiqua (strain Angola)).